Consider the following 275-residue polypeptide: Glucosamine-6-phosphate deaminase 2 (275 aa).

Asp-72 serves as the catalytic Proton acceptor; for enolization step. The stretch at Asn-102–Ile-131 forms a coiled coil. Catalysis depends on Asp-141, which acts as the For ring-opening step. The active-site Proton acceptor; for ring-opening step is His-143. The active-site For ring-opening step is the Glu-148.

It belongs to the glucosamine/galactosamine-6-phosphate isomerase family. Homohexamer.

The protein resides in the cytoplasm. It catalyses the reaction alpha-D-glucosamine 6-phosphate + H2O = beta-D-fructose 6-phosphate + NH4(+). In terms of biological role, catalyzes the reversible conversion of alpha-D-glucosamine 6-phosphate (GlcN-6P) into beta-D-fructose 6-phosphate (Fru-6P) and ammonium ion, a regulatory reaction step in de novo uridine diphosphate-N-acetyl-alpha-D-glucosamine (UDP-GlcNAc) biosynthesis via hexosamine pathway. The sequence is that of Glucosamine-6-phosphate deaminase 2 from Xenopus laevis (African clawed frog).